Reading from the N-terminus, the 202-residue chain is Small ribosomal subunit protein uS4 (202 aa).

The segment at 23–42 (RKNARRAYAPGQHGQARKKR) is disordered. One can recognise an S4 RNA-binding domain in the interval 90-153 (MRLDNTVFRL…RSQDLVKRNM (64 aa)).

It belongs to the universal ribosomal protein uS4 family. In terms of assembly, part of the 30S ribosomal subunit. Contacts protein S5. The interaction surface between S4 and S5 is involved in control of translational fidelity.

In terms of biological role, one of the primary rRNA binding proteins, it binds directly to 16S rRNA where it nucleates assembly of the body of the 30S subunit. With S5 and S12 plays an important role in translational accuracy. The protein is Small ribosomal subunit protein uS4 of Microcystis aeruginosa (strain NIES-843 / IAM M-2473).